A 362-amino-acid chain; its full sequence is MDFDSYADNYSKSISKKQCLELFEDNENLFNILNCANKINKKINGNTITYVVNRNINFTNICVGDCKFCAFKVDENHNDAYFINPKEIGKKAFEAKKLGCTEVCIQGGLRNNIDVELQSNILKEVCSATKPLGGIHIHAFSPMEVKFASENSGLDIKEALMILKENGLNTMPGTAAEILDDNIRAELCPSKLSTKEWIKIVKTAHKVGIKTTSTMMYGHIEEYKHIVNHLFILKEIQEETGGITEFVPLSFMHKMAPIYYEGNARGGSSGIEDLKVYAISRMLFGDTIKNIQVSWVKLGIKLAQMGLKCGANDFGGTLMEENISKSAGASYGTYMGAEEIRNVINAIGGAPRERDTFYNILE.

The 247-residue stretch at 48-294 (ITYVVNRNIN…GDTIKNIQVS (247 aa)) folds into the Radical SAM core domain. Positions 62, 66, and 69 each coordinate [4Fe-4S] cluster.

The protein belongs to the radical SAM superfamily. CofH family. Consists of two subunits, CofG and CofH. [4Fe-4S] cluster is required as a cofactor.

It catalyses the reaction 5-amino-6-(D-ribitylamino)uracil + L-tyrosine + S-adenosyl-L-methionine = 5-amino-5-(4-hydroxybenzyl)-6-(D-ribitylimino)-5,6-dihydrouracil + 2-iminoacetate + 5'-deoxyadenosine + L-methionine + H(+). The protein operates within cofactor biosynthesis; coenzyme F0 biosynthesis. Catalyzes the radical-mediated synthesis of 5-amino-5-(4-hydroxybenzyl)-6-(D-ribitylimino)-5,6-dihydrouracil from 5-amino-6-(D-ribitylamino)uracil and L-tyrosine. The chain is 5-amino-6-(D-ribitylamino)uracil--L-tyrosine 4-hydroxyphenyl transferase from Methanococcus aeolicus (strain ATCC BAA-1280 / DSM 17508 / OCM 812 / Nankai-3).